The primary structure comprises 928 residues: Receptor-like kinase TMK4 (928 aa).

An N-terminal signal peptide occupies residues 1–24 (MEAPTPLLLLVLLTTITFFTTSVA). Over 25 to 472 (DDQTAMLALA…GGSSGGGGSK (448 aa)) the chain is Extracellular. Cys51 and Cys58 are disulfide-bonded. LRR repeat units follow at residues 61–84 (GRVT…ISTL), 85–107 (SELK…FAKL), 108–130 (SSLQ…AFAG), 132–157 (TSLQ…LVDS), 158–180 (TSLT…IFDS), 181–205 (LASL…LGKS), 207–229 (IQNL…LSSM), 230–251 (TSLS…DLSK), 252–276 (SENL…LLTL), and 278–298 (SLKN…LFSP). Asn144 carries N-linked (GlcNAc...) asparagine glycosylation. The N-linked (GlcNAc...) asparagine glycan is linked to Asn193. N-linked (GlcNAc...) asparagine glycosylation is present at Asn281. Disulfide bonds link Cys310–Cys318 and Cys348–Cys356. LRR repeat units follow at residues 360–383 (GKNV…AIAN), 384–407 (LTSL…ELTF), and 408–435 (MTSL…VKFS). Residue Asn383 is glycosylated (N-linked (GlcNAc...) asparagine). Residues 445-465 (TNGGDGSSPGTGGASGGPGGS) form a disordered region. The chain crosses the membrane as a helical span at residues 473 to 493 (VGVIVGVIVAVLVFLAILGFV). At 494–928 (VYKFVMKRKY…PNTFDSADGR (435 aa)) the chain is on the cytoplasmic side. The 281-residue stretch at 578–858 (FSEDNILGRG…HAVNVLGPLV (281 aa)) folds into the Protein kinase domain. ATP-binding positions include 584–592 (LGRGGFGVV) and Lys606. The active-site Proton acceptor is Asp707. Composition is skewed to polar residues over residues 898-911 (FHGD…QSSI) and 918-928 (FPNTFDSADGR). A disordered region spans residues 898–928 (FHGDFSYSQTQSSIPPKASGFPNTFDSADGR).

The protein belongs to the protein kinase superfamily. Ser/Thr protein kinase family. Interacts with BAK1 (via kinase domain), SERK4 and SERK5. As to expression, expressed in roots, leaves, stems, siliques and flowers. Ubiquitous, with a high expression in mature pollen grains and in the pericycle and the xylem vasculature of the primary and lateral roots.

Its subcellular location is the membrane. The enzyme catalyses L-seryl-[protein] + ATP = O-phospho-L-seryl-[protein] + ADP + H(+). The catalysed reaction is L-threonyl-[protein] + ATP = O-phospho-L-threonyl-[protein] + ADP + H(+). Functionally, involved in auxin signal transduction and cell expansion and proliferation regulation. May be involved in brassinosteroid-mediated plant growth and development via auxin regulation. May be involved in microspore and pollen development. This chain is Receptor-like kinase TMK4, found in Arabidopsis thaliana (Mouse-ear cress).